Consider the following 482-residue polypeptide: Chitobiosyldiphosphodolichol beta-mannosyltransferase (482 aa).

At 1 to 2 (MA) the chain is on the lumenal side. The helical transmembrane segment at 3 to 23 (ASCVALLVLALLLLVLLLGLW) threads the bilayer. Topologically, residues 24–99 (KRGRQTGRAR…DLRGLGAGPR (76 aa)) are cytoplasmic. Residues 100-120 (ILQYGVKVVFQAVYLLWKMMR) constitute an intramembrane region (helical). Topologically, residues 121 to 482 (MDPAAYIFLQ…PCGHPSCRGF (362 aa)) are cytoplasmic. Serine 242 is modified (phosphoserine).

Belongs to the glycosyltransferase group 1 family. Glycosyltransferase 33 subfamily.

The protein localises to the endoplasmic reticulum membrane. The catalysed reaction is an N,N'-diacetylchitobiosyl-diphospho-di-trans,poly-cis-dolichol + GDP-alpha-D-mannose = a beta-D-Man-(1-&gt;4)-beta-D-GlcNAc-(1-&gt;4)-alpha-D-GlcNAc-diphospho-di-trans,poly-cis-dolichol + GDP + H(+). It participates in protein modification; protein glycosylation. Mannosyltransferase that operates in the biosynthetic pathway of dolichol-linked oligosaccharides, the glycan precursors employed in protein asparagine (N)-glycosylation. The assembly of dolichol-linked oligosaccharides begins on the cytosolic side of the endoplasmic reticulum membrane and finishes in its lumen. The sequential addition of sugars to dolichol pyrophosphate produces dolichol-linked oligosaccharides containing fourteen sugars, including two GlcNAcs, nine mannoses and three glucoses. Once assembled, the oligosaccharide is transferred from the lipid to nascent proteins by oligosaccharyltransferases. Catalyzes, on the cytoplasmic face of the endoplasmic reticulum, the addition of the first mannose residues to the dolichol-linked oligosaccharide chain, to produce Man1GlcNAc(2)-PP-dolichol core oligosaccharide. Man1GlcNAc(2)-PP-dolichol is a substrate for ALG2, the following enzyme in the biosynthetic pathway. In Mus musculus (Mouse), this protein is Chitobiosyldiphosphodolichol beta-mannosyltransferase.